We begin with the raw amino-acid sequence, 53 residues long: UPF0391 membrane protein Bmul_5473/BMULJ_06024 (53 aa).

2 helical membrane-spanning segments follow: residues 5–25 and 30–50; these read ALIF…GIAA and IAKI…LLGV.

It belongs to the UPF0391 family.

It is found in the cell membrane. This is UPF0391 membrane protein Bmul_5473/BMULJ_06024 from Burkholderia multivorans (strain ATCC 17616 / 249).